The chain runs to 383 residues: Smad nuclear-interacting protein 1 (383 aa).

Positions 1-10 are enriched in basic and acidic residues; the sequence is MKAGKSERER. A disordered region spans residues 1 to 209; that stretch reads MKAGKSERER…NRSKEVPVKE (209 aa). A Phosphoserine modification is found at Ser18. Lys28 is covalently cross-linked (Glycyl lysine isopeptide (Lys-Gly) (interchain with G-Cter in SUMO); alternate). Residue Lys28 forms a Glycyl lysine isopeptide (Lys-Gly) (interchain with G-Cter in SUMO1); alternate linkage. A Glycyl lysine isopeptide (Lys-Gly) (interchain with G-Cter in SUMO2); alternate cross-link involves residue Lys28. Basic and acidic residues predominate over residues 28-43; the sequence is KQERLSPEPVAHRRPD. A phosphoserine mark is found at Ser33, Ser48, and Ser50. Residues 44-56 are compositionally biased toward low complexity; that stretch reads APAASLSPPAAEP. Over residues 59-90 the composition is skewed to basic residues; it reads SGHRGSRARSPAKKKSKSSGRRSKSPRTKRSQ. A Phosphoserine modification is found at Ser91. Composition is skewed to basic and acidic residues over residues 99 to 134 and 143 to 159; these read VKQE…ERDR and RSSD…DRDS. A Glycyl lysine isopeptide (Lys-Gly) (interchain with G-Cter in SUMO2) cross-link involves residue Lys100. The residue at position 145 (Ser145) is a Phosphoserine. The stretch at 153–194 forms a coiled coil; sequence QDRDRDSQNLQAQEEERDFHNARRREHRQQNESAGSEAQEVI. A Glycyl lysine isopeptide (Lys-Gly) (interchain with G-Cter in SUMO2) cross-link involves residue Lys210. In terms of domain architecture, FHA spans 268–331; it reads YLLGRHRRIA…NGTFLNNKRI (64 aa). Over residues 359 to 369 the composition is skewed to basic and acidic residues; it reads ESSDTSELDRK. The disordered stretch occupies residues 359-383; that stretch reads ESSDTSELDRKEDEDDEEEEMVSDS. The span at 370 to 383 shows a compositional bias: acidic residues; sequence EDEDDEEEEMVSDS. Phosphoserine is present on Ser381.

Component of activated spliceosome complexes. Binds SMAD4 and CREBBP/EP300. Component of the minor spliceosome, which splices U12-type introns. Binds the SMAD1/OAZ1/PSMB4 complex. Interacts with DROSHA and SMARCA4. Component of the SNARP complex which consists at least of SNIP1, SNW1, THRAP3, BCLAF1 and PNN. Post-translationally, degraded by the proteasome upon binding to the SMAD1/OAZ1/PSMB4 complex.

It localises to the nucleus. Its function is as follows. Required for pre-mRNA splicing as component of the spliceosome. As a component of the minor spliceosome, involved in the splicing of U12-type introns in pre-mRNAs. Down-regulates NF-kappa-B signaling by competing with RELA for CREBBP/EP300 binding. Involved in the microRNA (miRNA) biogenesis. May be involved in cyclin-D1/CCND1 mRNA stability through the SNARP complex which associates with both the 3'end of the CCND1 gene and its mRNA. The polypeptide is Smad nuclear-interacting protein 1 (Snip1) (Mus musculus (Mouse)).